The following is a 118-amino-acid chain: Hydrogenase maturation factor HypA (118 aa).

Residue His2 participates in Ni(2+) binding. Residues Cys73, Cys76, Cys93, and Cys96 each coordinate Zn(2+).

This sequence belongs to the HypA/HybF family.

Functionally, involved in the maturation of [NiFe] hydrogenases. Required for nickel insertion into the metal center of the hydrogenase. The chain is Hydrogenase maturation factor HypA from Lawsonia intracellularis (strain PHE/MN1-00).